Reading from the N-terminus, the 45-residue chain is MSKRTFQPNNRKRAKTHGFRLRMRTRAGRAILSARRAKGRQKLSA.

This sequence belongs to the bacterial ribosomal protein bL34 family.

This chain is Large ribosomal subunit protein bL34, found in Leifsonia xyli subsp. xyli (strain CTCB07).